Here is a 325-residue protein sequence, read N- to C-terminus: Brain mitochondrial carrier protein 1 (325 aa).

The next 6 helical transmembrane spans lie at 38 to 54 (GLNWKPFVYGGLASIVA), 112 to 128 (LRQASYGTIKIGIYQSL), 145 to 165 (MICGVVSGVISSTIANPTDVL), 199 to 215 (GVVPTAQRAAIVVGVEL), 240 to 256 (VSSFTCGLAGALASNPV), and 298 to 315 (GFWPNWLRLGPWNIIFFI). 3 Solcar repeats span residues 42 to 131 (KPFV…LKRL), 139 to 224 (ETLL…TKKH), and 233 to 323 (DTIL…LKRL).

It belongs to the mitochondrial carrier (TC 2.A.29) family. Homotetramer. In terms of tissue distribution, mainly expressed in brain, particularly abundant in cortex, hippocampus thalamus, amygdala and hypothalamus. Highly expressed in heart and kidney, but not liver or lung (at protein level). In the nervous system, expressed in cortex, basal ganglia, substantia nigra, cerebellum, and spinal cord (at protein level).

The protein localises to the mitochondrion inner membrane. The enzyme catalyses sulfite(in) + sulfate(out) = sulfite(out) + sulfate(in). It catalyses the reaction thiosulfate(in) + sulfate(out) = thiosulfate(out) + sulfate(in). The catalysed reaction is sulfate(out) + phosphate(in) = sulfate(in) + phosphate(out). It carries out the reaction oxalate(in) + sulfate(out) = oxalate(out) + sulfate(in). The enzyme catalyses malonate(in) + sulfate(out) = malonate(out) + sulfate(in). It catalyses the reaction maleate(in) + sulfate(out) = maleate(out) + sulfate(in). The catalysed reaction is (S)-malate(in) + sulfate(out) = (S)-malate(out) + sulfate(in). It carries out the reaction (3S)-citramalate(in) + sulfate(out) = (3S)-citramalate(out) + sulfate(in). The enzyme catalyses (3R)-citramalate(in) + sulfate(out) = (3R)-citramalate(out) + sulfate(in). It catalyses the reaction sulfate(out) + succinate(in) = sulfate(in) + succinate(out). The catalysed reaction is (S,S)-tartrate(in) + sulfate(out) = (S,S)-tartrate(out) + sulfate(in). It carries out the reaction (2R,3R)-tartrate(in) + sulfate(out) = (2R,3R)-tartrate(out) + sulfate(in). The enzyme catalyses D-aspartate(in) + sulfate(out) = D-aspartate(out) + sulfate(in). It catalyses the reaction L-aspartate(in) + sulfate(out) = L-aspartate(out) + sulfate(in). The catalysed reaction is sulfate(in) = sulfate(out). It carries out the reaction phosphate(in) = phosphate(out). The enzyme catalyses (S)-malate(out) = (S)-malate(in). It catalyses the reaction citrate(in) = citrate(out). The catalysed reaction is L-aspartate(out) = L-aspartate(in). It carries out the reaction L-glutamate(out) = L-glutamate(in). The enzyme catalyses H(+)(in) = H(+)(out). It catalyses the reaction chloride(in) = chloride(out). Its function is as follows. Transports inorganic anions (sulfate, sulfite, thiosulfate and phosphate) and, to a lesser extent, a variety of dicarboxylates (e.g. malonate, malate and citramalate) and, even more so, aspartate and glutamate and tricarboxylates. May catalyze the export of sulfite and thiosulfate (the hydrogen sulfide degradation products) from the mitochondria, thereby modulating the level of the hydrogen sulfide. Also can mediate a very low unidirectional transport of anions including sulfate, phosphate, (S)-malate, citrate, L-aspartate and L-glutamate. Maintains oxidative balance (through uncoupling activities) and ATP production (by modifying mitochondrial membrane potential). Is able to transport protons across lipid membranes. Also exhibits transmembrane chloride transport activity to a lesser extent. May modify mitochondrial respiratory efficiency and mitochondrial oxidant production. The polypeptide is Brain mitochondrial carrier protein 1 (Mus musculus (Mouse)).